An 88-amino-acid chain; its full sequence is Large ribosomal subunit protein bL31B (88 aa).

The protein belongs to the bacterial ribosomal protein bL31 family. Type B subfamily. In terms of assembly, part of the 50S ribosomal subunit.

This is Large ribosomal subunit protein bL31B from Pasteurella multocida (strain Pm70).